Consider the following 161-residue polypeptide: ATP synthase subunit b 1 (161 aa).

A helical membrane pass occupies residues 6-26 (ETWVAIAFVILMVVFGYLGVF).

It belongs to the ATPase B chain family. As to quaternary structure, F-type ATPases have 2 components, F(1) - the catalytic core - and F(0) - the membrane proton channel. F(1) has five subunits: alpha(3), beta(3), gamma(1), delta(1), epsilon(1). F(0) has three main subunits: a(1), b(2) and c(10-14). The alpha and beta chains form an alternating ring which encloses part of the gamma chain. F(1) is attached to F(0) by a central stalk formed by the gamma and epsilon chains, while a peripheral stalk is formed by the delta and b chains.

It localises to the cell inner membrane. Its function is as follows. F(1)F(0) ATP synthase produces ATP from ADP in the presence of a proton or sodium gradient. F-type ATPases consist of two structural domains, F(1) containing the extramembraneous catalytic core and F(0) containing the membrane proton channel, linked together by a central stalk and a peripheral stalk. During catalysis, ATP synthesis in the catalytic domain of F(1) is coupled via a rotary mechanism of the central stalk subunits to proton translocation. Functionally, component of the F(0) channel, it forms part of the peripheral stalk, linking F(1) to F(0). The sequence is that of ATP synthase subunit b 1 from Bradyrhizobium diazoefficiens (strain JCM 10833 / BCRC 13528 / IAM 13628 / NBRC 14792 / USDA 110).